A 510-amino-acid chain; its full sequence is NAD(P)H-quinone oxidoreductase subunit 2 B, chloroplastic (510 aa).

13 helical membrane passes run 24–44 (LLLF…GLIL), 59–79 (WFYF…LFRW), 99–119 (IFQF…VEYI), 124–144 (MAIT…MFLC), 150–170 (ITIF…SGYT), 184–204 (LLMG…LYGL), 229–249 (ISIA…LAPF), 295–315 (WHLL…LIAI), 323–343 (MLAY…IVGD), 354–374 (YMLF…LFGL), 395–415 (ALSL…AGFF), 418–438 (LHLF…IGLL), and 484–504 (MIVC…ILAI).

It belongs to the complex I subunit 2 family. NDH is composed of at least 16 different subunits, 5 of which are encoded in the nucleus.

The protein resides in the plastid. The protein localises to the chloroplast thylakoid membrane. It carries out the reaction a plastoquinone + NADH + (n+1) H(+)(in) = a plastoquinol + NAD(+) + n H(+)(out). The enzyme catalyses a plastoquinone + NADPH + (n+1) H(+)(in) = a plastoquinol + NADP(+) + n H(+)(out). Functionally, NDH shuttles electrons from NAD(P)H:plastoquinone, via FMN and iron-sulfur (Fe-S) centers, to quinones in the photosynthetic chain and possibly in a chloroplast respiratory chain. The immediate electron acceptor for the enzyme in this species is believed to be plastoquinone. Couples the redox reaction to proton translocation, and thus conserves the redox energy in a proton gradient. This Acorus calamus (Sweet flag) protein is NAD(P)H-quinone oxidoreductase subunit 2 B, chloroplastic.